The following is a 120-amino-acid chain: NAD(P)H-quinone oxidoreductase subunit 3 (120 aa).

Helical transmembrane passes span 10-30, 64-84, and 89-109; these read LLVFLIVCSLLPILALGASAL, MFALVFVIFDVETVFLYPWAV, and LGLLAFVEALIFIAILVVGLV.

The protein belongs to the complex I subunit 3 family. As to quaternary structure, NDH-1 can be composed of about 15 different subunits; different subcomplexes with different compositions have been identified which probably have different functions.

The protein localises to the cellular thylakoid membrane. The catalysed reaction is a plastoquinone + NADH + (n+1) H(+)(in) = a plastoquinol + NAD(+) + n H(+)(out). The enzyme catalyses a plastoquinone + NADPH + (n+1) H(+)(in) = a plastoquinol + NADP(+) + n H(+)(out). Functionally, NDH-1 shuttles electrons from an unknown electron donor, via FMN and iron-sulfur (Fe-S) centers, to quinones in the respiratory and/or the photosynthetic chain. The immediate electron acceptor for the enzyme in this species is believed to be plastoquinone. Couples the redox reaction to proton translocation, and thus conserves the redox energy in a proton gradient. Cyanobacterial NDH-1 also plays a role in inorganic carbon-concentration. The sequence is that of NAD(P)H-quinone oxidoreductase subunit 3 from Synechococcus sp. (strain JA-2-3B'a(2-13)) (Cyanobacteria bacterium Yellowstone B-Prime).